Reading from the N-terminus, the 315-residue chain is Protein LST8 homolog (315 aa).

WD repeat units lie at residues 1-31 (MGDQ…KTMR), 33-71 (VETS…TAPV), 76-115 (GVQK…PHCS), 119-158 (DCES…HECI), 161-200 (EVDA…DQKM), 211-250 (AHTR…KWRE), 253-292 (IENY…PTRE), and 295-315 (GHTK…KVNH).

It belongs to the WD repeat LST8 family.

The protein localises to the cytoplasm. The protein is Protein LST8 homolog of Drosophila pseudoobscura pseudoobscura (Fruit fly).